Reading from the N-terminus, the 220-residue chain is MERYAGALEEVADGARQQERHYQLLSALQSLVKELPSSFQQRLSYTTLSDLALALLDGTVFEIVQGLLEIQHLTEKSLYNQRLRLQNEHRVLRQALRQKHQEAQQACRPHNLPVLQAAQQRELEAVEHRIREEQRAMDQKIVLELDRKVADQQSTLEKAGVAGFYVTTNPQELMLQMNLLELIRKLQQRGCWAGKAALGLGGPWQLPAAQCDQKGSPVPP.

Residues Lys76–Val142 adopt a coiled-coil conformation.

This sequence belongs to the gonadal family. As to expression, found in all tissues examined with highest expression in liver, heart and skeletal muscle. Lower levels in pancreas and placenta. Weak expression in brain.

Its subcellular location is the nucleus. Its function is as follows. May play a role in neural crest cell migration into the third and fourth pharyngeal pouches. The chain is Protein DGCR6 (DGCR6) from Homo sapiens (Human).